A 433-amino-acid chain; its full sequence is Adenylosuccinate synthetase (433 aa).

GTP contacts are provided by residues Gly11–Lys17 and Gly39–Thr41. Asp12 functions as the Proton acceptor in the catalytic mechanism. The Mg(2+) site is built by Asp12 and Gly39. Residues Asp12–Lys15, Asn37–His40, Thr134, Arg148, Asn230, Thr245, and Arg309 each bind IMP. The Proton donor role is filled by His40. Val305 to Arg311 contacts substrate. GTP is bound by residues Arg311, Lys337–Asp339, and Gly419–Gly421.

The protein belongs to the adenylosuccinate synthetase family. Homodimer. Mg(2+) is required as a cofactor.

Its subcellular location is the cytoplasm. The enzyme catalyses IMP + L-aspartate + GTP = N(6)-(1,2-dicarboxyethyl)-AMP + GDP + phosphate + 2 H(+). The protein operates within purine metabolism; AMP biosynthesis via de novo pathway; AMP from IMP: step 1/2. Functionally, plays an important role in the de novo pathway and in the salvage pathway of purine nucleotide biosynthesis. Catalyzes the first committed step in the biosynthesis of AMP from IMP. In Eremothecium gossypii (strain ATCC 10895 / CBS 109.51 / FGSC 9923 / NRRL Y-1056) (Yeast), this protein is Adenylosuccinate synthetase.